Consider the following 523-residue polypeptide: Exodeoxyribonuclease 7 large subunit (523 aa).

The interval 502 to 523 (PGASPAARTRAGKAKADQGSLF) is disordered.

This sequence belongs to the XseA family. In terms of assembly, heterooligomer composed of large and small subunits.

The protein resides in the cytoplasm. It catalyses the reaction Exonucleolytic cleavage in either 5'- to 3'- or 3'- to 5'-direction to yield nucleoside 5'-phosphates.. In terms of biological role, bidirectionally degrades single-stranded DNA into large acid-insoluble oligonucleotides, which are then degraded further into small acid-soluble oligonucleotides. This chain is Exodeoxyribonuclease 7 large subunit, found in Rhodospirillum centenum (strain ATCC 51521 / SW).